A 383-amino-acid polypeptide reads, in one-letter code: tRNA-specific 2-thiouridylase MnmA (383 aa).

ATP contacts are provided by residues 6-13 (AMSGGVDS) and Leu32. Cys101 functions as the Nucleophile in the catalytic mechanism. Cys101 and Cys199 are joined by a disulfide. Gly125 serves as a coordination point for ATP. Positions 148 to 150 (KDQ) are interaction with tRNA. Catalysis depends on Cys199, which acts as the Cysteine persulfide intermediate.

It belongs to the MnmA/TRMU family.

The protein localises to the cytoplasm. The catalysed reaction is S-sulfanyl-L-cysteinyl-[protein] + uridine(34) in tRNA + AH2 + ATP = 2-thiouridine(34) in tRNA + L-cysteinyl-[protein] + A + AMP + diphosphate + H(+). Functionally, catalyzes the 2-thiolation of uridine at the wobble position (U34) of tRNA, leading to the formation of s(2)U34. The polypeptide is tRNA-specific 2-thiouridylase MnmA (Kocuria rhizophila (strain ATCC 9341 / DSM 348 / NBRC 103217 / DC2201)).